Here is a 192-residue protein sequence, read N- to C-terminus: GTP cyclohydrolase-2 (192 aa).

A GTP-binding site is contributed by 47–51; sequence RIHSE. 3 residues coordinate Zn(2+): Cys-52, Cys-63, and Cys-65. Residues Gln-68, 90–92, and Thr-112 contribute to the GTP site; that span reads EGR. Asp-124 acts as the Proton acceptor in catalysis. Arg-126 functions as the Nucleophile in the catalytic mechanism. Positions 147 and 152 each coordinate GTP.

The protein belongs to the GTP cyclohydrolase II family. Requires Zn(2+) as cofactor.

The enzyme catalyses GTP + 4 H2O = 2,5-diamino-6-hydroxy-4-(5-phosphoribosylamino)-pyrimidine + formate + 2 phosphate + 3 H(+). It participates in cofactor biosynthesis; riboflavin biosynthesis; 5-amino-6-(D-ribitylamino)uracil from GTP: step 1/4. Its function is as follows. Catalyzes the conversion of GTP to 2,5-diamino-6-ribosylamino-4(3H)-pyrimidinone 5'-phosphate (DARP), formate and pyrophosphate. This Picrophilus torridus (strain ATCC 700027 / DSM 9790 / JCM 10055 / NBRC 100828 / KAW 2/3) protein is GTP cyclohydrolase-2.